We begin with the raw amino-acid sequence, 839 residues long: MANILRKVIENDKGELRKLEKIAKKVESYADQMASLSDRDLQGKTLEFKERYQKGETLEQLLPEAFAVVREAAKRVLGLFPYRVQIMGGIVLHNGDVPEMRTGEGKTLTATMPVYLNAIAGEGVHVITVNEYLSTRDATEMGEVYSWLGLSVGINLAAKSPAEKREAYNCDITYSTNSEVGFDYLRDNMVVRQEDMVQRPLNFALVDEVDSVLIDEARTPLIVSGAVSSETNQLYIRADMFVKTLTSVDYVIDVPTKTIGLSDSGIDKAESYFNLSNLYDIENVALTHFIDNALRANYIMLLDIDYVVSEDGEILIVDQFTGRTMEGRRFSDGLHQAIEAKEGVRIQEESKTSASITYQNMFRMYKKLAGMTGTAKTEEEEFREVYNMRIIPIPTNRPIARIDHTDLLYPTLESKFRAVVEDVKTRHAKGQPILVGTVAVETSDLISRKLVEAGIPHEVLNAKNHFKEAQIIMNAGQRGAVTIATNMAGRGTDIKLGEGVRELGGLCVIGTERHESRRIDNQLRGRSGRQGDPGESQFYLSLEDDLMRRFGSDRIKAFLDRMKLDEEDTVIKSGMLGRQVESAQKRVEGNNYDTRKQVLQYDDVMREQREIIYANRRDVITANRDLGPEIKAMIKRTIDRAVDAHARSNRKDAIDAIVTFARTSLVPEESISAKELRGLKDDQIKEKLYQRALAIYDQQLSKLRDQEAIIEFQKVLILMIVDNKWTEHIDALDQLRNAVGLRGYAQNNPVVEYQAEGFKMFQDMIGAIEFDVTRTMMKAQIHEQERERASQRATTAAPQNIQSQQSANTDDLPKVERNEACPCGSGKKFKNCHGRKSFS.

ATP-binding positions include Gln85, 103–107 (GEGKT), and Asp493. The segment covering 780-790 (QIHEQERERAS) has biased composition (basic and acidic residues). The tract at residues 780-839 (QIHEQERERASQRATTAAPQNIQSQQSANTDDLPKVERNEACPCGSGKKFKNCHGRKSFS) is disordered. Polar residues predominate over residues 791–809 (QRATTAAPQNIQSQQSANT). Residues Cys821, Cys823, Cys832, and His833 each coordinate Zn(2+). Basic residues predominate over residues 827-839 (KKFKNCHGRKSFS).

Belongs to the SecA family. In terms of assembly, monomer and homodimer. Part of the essential Sec protein translocation apparatus which comprises SecA, SecYEG and auxiliary proteins SecDF. Other proteins may also be involved. Zn(2+) serves as cofactor.

The protein resides in the cell membrane. It is found in the cytoplasm. The catalysed reaction is ATP + H2O + cellular proteinSide 1 = ADP + phosphate + cellular proteinSide 2.. Part of the Sec protein translocase complex. Interacts with the SecYEG preprotein conducting channel. Has a central role in coupling the hydrolysis of ATP to the transfer of proteins into and across the cell membrane, serving as an ATP-driven molecular motor driving the stepwise translocation of polypeptide chains across the membrane. This chain is Protein translocase subunit SecA, found in Streptococcus pyogenes serotype M6 (strain ATCC BAA-946 / MGAS10394).